The sequence spans 183 residues: Oligoribonuclease (183 aa).

The Exonuclease domain maps to 8–171 (LIWIDLEMTG…DDIRDSIHEL (164 aa)). Y129 is a catalytic residue.

Belongs to the oligoribonuclease family.

It localises to the cytoplasm. In terms of biological role, 3'-to-5' exoribonuclease specific for small oligoribonucleotides. The chain is Oligoribonuclease from Halorhodospira halophila (strain DSM 244 / SL1) (Ectothiorhodospira halophila (strain DSM 244 / SL1)).